A 321-amino-acid polypeptide reads, in one-letter code: Torsin-2A (321 aa).

The N-terminal stretch at 1-26 (MAAATRSCRPWGSLLGLIWLVSAAAA) is a signal peptide. Residue 93–100 (GWTGTGKS) participates in ATP binding. Asparagine 149 is a glycosylation site (N-linked (GlcNAc...) asparagine).

Belongs to the ClpA/ClpB family. Torsin subfamily. Homohexamer. Interacts with TOR1AIP1.

The protein localises to the endoplasmic reticulum lumen. The chain is Torsin-2A (TOR2A) from Bos taurus (Bovine).